The primary structure comprises 188 residues: Multiple organellar RNA editing factor 7, mitochondrial (188 aa).

A mitochondrion-targeting transit peptide spans 1–20; the sequence is MARIIRRPLNLTAAVRFRLS. The disordered stretch occupies residues 169–188; sequence DAKSGVVKKKHRRKRKKKLI. Residues 174 to 188 show a composition bias toward basic residues; it reads VVKKKHRRKRKKKLI.

This sequence belongs to the MORF family. Heterodimers with MORF8/RIP1, MORF5/RIP5 and MORF6/RIP6.

Its subcellular location is the mitochondrion. In terms of biological role, involved in organellar RNA editing. Required for the processing of few RNA editing sites in mitochondria. The protein is Multiple organellar RNA editing factor 7, mitochondrial of Arabidopsis thaliana (Mouse-ear cress).